The primary structure comprises 119 residues: MSKIKTLRLEATIHKLLSQAISTEINNSLIKTSVITAIKLSDDKSVAKIYIDCLIPNNIAKTLQAYKDATGVFRHVLSKHLTIRRIPQLVFYYDDSISKGAKIDQILAEIKQEKKENHE.

The protein belongs to the RbfA family. As to quaternary structure, monomer. Binds 30S ribosomal subunits, but not 50S ribosomal subunits or 70S ribosomes.

Its subcellular location is the cytoplasm. Functionally, one of several proteins that assist in the late maturation steps of the functional core of the 30S ribosomal subunit. Associates with free 30S ribosomal subunits (but not with 30S subunits that are part of 70S ribosomes or polysomes). Required for efficient processing of 16S rRNA. May interact with the 5'-terminal helix region of 16S rRNA. The protein is Ribosome-binding factor A of Mycoplasmoides gallisepticum (strain R(low / passage 15 / clone 2)) (Mycoplasma gallisepticum).